The sequence spans 474 residues: Alanine/serine racemase (474 aa).

Residues 139-140 (GS) and Q282 each bind pyridoxal 5'-phosphate. K308 carries the N6-(pyridoxal phosphate)lysine modification. T336 is a pyridoxal 5'-phosphate binding site.

This sequence belongs to the class-III pyridoxal-phosphate-dependent aminotransferase family. As to quaternary structure, homohexamer. Requires pyridoxal 5'-phosphate as cofactor.

It carries out the reaction L-alanine = D-alanine. It catalyses the reaction L-serine = D-serine. With respect to regulation, completely inhibited by hydroxylamine hydrochloride. Its function is as follows. Catalyzes the interconversion of L-alanine and D-alanine, and L-serine and D-serine. Has weak activity with valine and threonine. The protein is Alanine/serine racemase of Pyrococcus horikoshii (strain ATCC 700860 / DSM 12428 / JCM 9974 / NBRC 100139 / OT-3).